The following is a 265-amino-acid chain: Cytochrome c oxidase subunit 3 (265 aa).

A run of 6 helical transmembrane segments spans residues 41–61 (GGARLLSLGLIFILYTMFVWW), 85–105 (GFILFIVSEVMFFFAFFWAFF), 137–157 (TLILLSSGAAVTWAHHAILAG), 162–182 (AVYALVATVLLALVFTGFQGM), 200–220 (FFLATGFHGFHVIIGTLFLII), and 245–265 (WHFVDVVWLFLFVSIYWWGGI).

The protein belongs to the cytochrome c oxidase subunit 3 family. In terms of assembly, component of the cytochrome c oxidase (complex IV, CIV), a multisubunit enzyme composed of a catalytic core of 3 subunits and several supernumerary subunits. The complex exists as a monomer or a dimer and forms supercomplexes (SCs) in the inner mitochondrial membrane with ubiquinol-cytochrome c oxidoreductase (cytochrome b-c1 complex, complex III, CIII).

The protein localises to the mitochondrion inner membrane. The enzyme catalyses 4 Fe(II)-[cytochrome c] + O2 + 8 H(+)(in) = 4 Fe(III)-[cytochrome c] + 2 H2O + 4 H(+)(out). Its function is as follows. Component of the cytochrome c oxidase, the last enzyme in the mitochondrial electron transport chain which drives oxidative phosphorylation. The respiratory chain contains 3 multisubunit complexes succinate dehydrogenase (complex II, CII), ubiquinol-cytochrome c oxidoreductase (cytochrome b-c1 complex, complex III, CIII) and cytochrome c oxidase (complex IV, CIV), that cooperate to transfer electrons derived from NADH and succinate to molecular oxygen, creating an electrochemical gradient over the inner membrane that drives transmembrane transport and the ATP synthase. Cytochrome c oxidase is the component of the respiratory chain that catalyzes the reduction of oxygen to water. Electrons originating from reduced cytochrome c in the intermembrane space (IMS) are transferred via the dinuclear copper A center (CU(A)) of subunit 2 and heme A of subunit 1 to the active site in subunit 1, a binuclear center (BNC) formed by heme A3 and copper B (CU(B)). The BNC reduces molecular oxygen to 2 water molecules using 4 electrons from cytochrome c in the IMS and 4 protons from the mitochondrial matrix. The protein is Cytochrome c oxidase subunit 3 (COX3) of Arabidopsis thaliana (Mouse-ear cress).